We begin with the raw amino-acid sequence, 347 residues long: Selenide, water dikinase (347 aa).

Cys17 is a catalytic residue. Residues Lys20 and Thr48–Asp50 contribute to the ATP site. Asp51 is a Mg(2+) binding site. ATP contacts are provided by residues Asp68, Asp91, and Gly139–Ser141. A Mg(2+)-binding site is contributed by Asp91. Asp227 provides a ligand contact to Mg(2+).

This sequence belongs to the selenophosphate synthase 1 family. Class I subfamily. Homodimer. Mg(2+) is required as a cofactor.

It catalyses the reaction hydrogenselenide + ATP + H2O = selenophosphate + AMP + phosphate + 2 H(+). In terms of biological role, synthesizes selenophosphate from selenide and ATP. This Shigella flexneri serotype 5b (strain 8401) protein is Selenide, water dikinase.